We begin with the raw amino-acid sequence, 370 residues long: MNYSHDNWSAILAHIGKPEELDTSARNAGALTRRREIRDAATLLRLGLAYGPGGMSLREVTAWAQLHDVATLSDVALLKRLRNAADWFGILAAQTLAVRAAVTGCTSGKRLRLVDGTAISAPGGGSAEWRLHMGYDPHTCQFTDFELTDSRDAERLDRFAQTADEIRIADRGFGSRPECIRSLAFGEADYIVRVHWRGLRWLTAEGMRFDMMGFLRGLDCGKNGETTVMIGNSGNKKAGAPFPARLIAVSLPPEKALISKTRLLSENRRKGRVVQAETLEAAGHVLLLTSLPEDEYSAEQVADCYRLRWQIELAFKRLKSLLHLDALRAKEPELAKAWIFANLLAAFLIDDIIQPSLDFPPRSAGSEKKN.

This sequence belongs to the transposase 11 family.

Its function is as follows. Involved in the transposition of the insertion sequence IS186. The sequence is that of Putative transposase InsL for insertion sequence element IS186A (insL1) from Escherichia coli (strain K12).